Reading from the N-terminus, the 820-residue chain is DNA gyrase subunit A (820 aa).

The Topo IIA-type catalytic domain maps to 31–496 (IPDVRDGLKP…TLTNIEIEDL (466 aa)). Tyrosine 119 acts as the O-(5'-phospho-DNA)-tyrosine intermediate in catalysis. Positions 523-529 (QRRGGKG) match the GyrA-box motif.

Belongs to the type II topoisomerase GyrA/ParC subunit family. In terms of assembly, heterotetramer, composed of two GyrA and two GyrB chains. In the heterotetramer, GyrA contains the active site tyrosine that forms a transient covalent intermediate with DNA, while GyrB binds cofactors and catalyzes ATP hydrolysis.

The protein localises to the cytoplasm. The catalysed reaction is ATP-dependent breakage, passage and rejoining of double-stranded DNA.. In terms of biological role, a type II topoisomerase that negatively supercoils closed circular double-stranded (ds) DNA in an ATP-dependent manner to modulate DNA topology and maintain chromosomes in an underwound state. Negative supercoiling favors strand separation, and DNA replication, transcription, recombination and repair, all of which involve strand separation. Also able to catalyze the interconversion of other topological isomers of dsDNA rings, including catenanes and knotted rings. Type II topoisomerases break and join 2 DNA strands simultaneously in an ATP-dependent manner. This Lawsonia intracellularis (strain PHE/MN1-00) protein is DNA gyrase subunit A.